A 618-amino-acid polypeptide reads, in one-letter code: Leucine aminopeptidase 2 (618 aa).

Residues 140–142 (QCQ) and 272–277 (PYGGME) each bind a peptide. Residue His301 participates in Zn(2+) binding. Glu302 serves as the catalytic Proton acceptor. 2 residues coordinate Zn(2+): His305 and Glu324. Tyr389 (proton donor) is an active-site residue.

It belongs to the peptidase M1 family. The cofactor is Zn(2+).

It localises to the cytoplasm. It is found in the nucleus. The catalysed reaction is an epoxide + H2O = an ethanediol. Aminopeptidase that preferentially cleaves di- and tripeptides. Also has low epoxide hydrolase activity (in vitro). Can hydrolyze the epoxide leukotriene LTA(4) but it forms preferentially 5,6-dihydroxy-7,9,11,14-eicosatetraenoic acid rather than the cytokine leukotriene B(4) as the product compared to the homologous mammalian enzyme (in vitro). The chain is Leucine aminopeptidase 2 from Emericella nidulans (strain FGSC A4 / ATCC 38163 / CBS 112.46 / NRRL 194 / M139) (Aspergillus nidulans).